We begin with the raw amino-acid sequence, 190 residues long: Protein A52 (190 aa).

Belongs to the orthopoxvirus A52R protein family. Interacts with host TRAF6 and IRAK2.

Bcl-2-like protein which targets host toll-like receptor signaling complexes to suppress innate immune response. Interacts with host TRAF6 to activate p38 and subsequently induce the expression of several cytokines such as IL-10. Also associates with host IRAK2 to inhibit NF-kappa-B signaling. The polypeptide is Protein A52 (Vaccinia virus (strain Western Reserve) (VACV)).